Here is a 217-residue protein sequence, read N- to C-terminus: MOB kinase activator 3A (217 aa).

Zn(2+) contacts are provided by Cys83, Cys88, His165, and His170.

This sequence belongs to the MOB1/phocein family.

May regulate the activity of kinases. This chain is MOB kinase activator 3A (MOB3A), found in Pongo abelii (Sumatran orangutan).